A 143-amino-acid chain; its full sequence is D-aminoacyl-tRNA deacylase (143 aa).

Residues 135–136 (GP) carry the Gly-cisPro motif, important for rejection of L-amino acids motif.

It belongs to the DTD family. Homodimer.

Its subcellular location is the cytoplasm. The enzyme catalyses glycyl-tRNA(Ala) + H2O = tRNA(Ala) + glycine + H(+). The catalysed reaction is a D-aminoacyl-tRNA + H2O = a tRNA + a D-alpha-amino acid + H(+). Functionally, an aminoacyl-tRNA editing enzyme that deacylates mischarged D-aminoacyl-tRNAs. Also deacylates mischarged glycyl-tRNA(Ala), protecting cells against glycine mischarging by AlaRS. Acts via tRNA-based rather than protein-based catalysis; rejects L-amino acids rather than detecting D-amino acids in the active site. By recycling D-aminoacyl-tRNA to D-amino acids and free tRNA molecules, this enzyme counteracts the toxicity associated with the formation of D-aminoacyl-tRNA entities in vivo and helps enforce protein L-homochirality. The sequence is that of D-aminoacyl-tRNA deacylase from Mycobacterium bovis (strain BCG / Pasteur 1173P2).